We begin with the raw amino-acid sequence, 822 residues long: uncharacterized protein (822 aa).

The interval 1–230 (MARGKRSTQR…NAAPLNKTDA (230 aa)) is disordered. Phosphoserine is present on Ser-27. The span at 34-44 (SKAKKNKKKLN) shows a compositional bias: basic residues. 3 positions are modified to phosphoserine: Ser-47, Ser-51, and Ser-55. Residue Tyr-57 is modified to Phosphotyrosine. Acidic residues predominate over residues 61 to 70 (PEDDEVDEEV). Basic residues predominate over residues 73-85 (VKKKPSKKSKKAK). Residues 92 to 106 (FADEQSVEEEEEEDS) are compositionally biased toward acidic residues. At Ser-97 the chain carries Phosphoserine. Residues 111-121 (RKNKKSSKKAS) show a composition bias toward basic residues. Acidic residues-rich tracts occupy residues 129–144 (LADD…EESE) and 163–172 (SEALDDGDIE). Phosphoserine is present on residues Ser-137 and Ser-163. 2 consecutive ABC transporter domains span residues 276-519 (LQVE…VQLA) and 594-809 (IKFQ…AKER). Residues 308–315 (APNGSGKS) and 627–634 (GPNGAGKT) each bind ATP.

The protein belongs to the ABC transporter superfamily.

The protein resides in the cytoplasm. This is an uncharacterized protein from Schizosaccharomyces pombe (strain 972 / ATCC 24843) (Fission yeast).